A 1088-amino-acid chain; its full sequence is DEAD-box ATP-dependent RNA helicase 40 (1088 aa).

Disordered stretches follow at residues 1 to 28 (MATTEDTPASAGPRYAPEDPTLPQPWKG), 47 to 178 (TQYE…QYAH), and 192 to 254 (TQGL…QNTH). At Ala2 the chain carries N-acetylalanine. A WW domain is found at 20–54 (PTLPQPWKGLIDGSTGILYYWNPETNVTQYERPSA). Composition is skewed to low complexity over residues 87–137 (VGHV…SQSM), 148–171 (QTYQPTTQQQQQGMQNQHSQMPQQ), and 200–215 (QTPQGGPHGQQFPSQQ). Over residues 222 to 231 (PKREGDEFHG) the composition is skewed to basic and acidic residues. Polar residues predominate over residues 236–254 (GFSQPHLPNSERSPSQNTH). Residues 435-463 (ITFESSGLPPEILRELLSAGFPSPTPIQA) carry the Q motif motif. The 175-residue stretch at 466–640 (WPIALQSRDI…SDLLVNPVQV (175 aa)) folds into the Helicase ATP-binding domain. 479–486 (AKTGSGKT) contributes to the ATP binding site. A DEAD box motif is present at residues 588–591 (DEAD). Residues 669–813 (RLEQILRSQE…QVPPQVRDIA (145 aa)) enclose the Helicase C-terminal domain. Gly residues-rich tracts occupy residues 861-885 (EGGFGGREGGFGGREGGFGGRGGRF), 893-902 (GRGGNRGRGF), 911-920 (NVGGRGGFGR), and 932-944 (FGRGSGRGFGRGV). The tract at residues 861–1033 (EGGFGGREGG…RRDRAPRVSG (173 aa)) is disordered. Basic and acidic residues predominate over residues 945–963 (GRFDNRRGRSRSRSPDLVR). Positions 969-983 (SSYSRSRSRSGSYSR) are enriched in low complexity. Residues 984 to 1013 (SRSRSRSWSRSRSRSPRHSRDRGGHNRSRS) are compositionally biased toward basic residues.

This sequence belongs to the DEAD box helicase family. DDX5/DBP2 subfamily.

The protein localises to the nucleus. It carries out the reaction ATP + H2O = ADP + phosphate + H(+). ATP-dependent RNA helicase involved nonsense-mediated mRNA decay and ribosome biogenesis through rRNA processing. This chain is DEAD-box ATP-dependent RNA helicase 40 (RH40), found in Arabidopsis thaliana (Mouse-ear cress).